We begin with the raw amino-acid sequence, 480 residues long: MSSTTVKNLVNQPYKYGFVTNIEADAIPRGLSEDVVRLISAKKNEPEFMLDFRLRAYRHWLTMAEPTWPAVHYPPIDYQDIIYYSAPKQSKKKLESLDEVDPALLETFEKLGIPLSEQKRLSNVAVDAIFDSVSIGTTFKEKLAEDGVIFCSISEALQEHPDLVQKYLGSVVPTADNFFAALNSAVFSDGSFVFIPKGVKCPMELSTYFRINNGDTGQFERTLIIAEEGASVSYLEGCTAPMYDTNQLHAAVVELVALDNADIKYSTVQNWYAGDENGKGGIYNFVTKRGLCKGVNSKISWTQVETGSAITWKYPSCVLVGDNSVGEFYSIALTNNKQQADTGTKMIHIGKNTRSIIISKGISAGNSANSYRGLVKMGPKAQGARNYSQCDSMLIGDRAAANTFPYIQVDNNTAKVEHEASTSKIGEDQLFYFAQRGISEEDAVSMLVSGFCKDVLNELPMEFAAEADKLLSLKLEGTVG.

Belongs to the iron-sulfur cluster assembly SufBD family.

This chain is Iron-sulfur cluster assembly SufBD family protein slr0074, found in Synechocystis sp. (strain ATCC 27184 / PCC 6803 / Kazusa).